The sequence spans 398 residues: Protochlorophyllide reductase, chloroplastic (398 aa).

A chloroplast-targeting transit peptide spans 1-64 (MALQAASLVS…NQQIGAIRAQ (64 aa)).

The protein belongs to the short-chain dehydrogenases/reductases (SDR) family. POR subfamily.

Its subcellular location is the plastid. It localises to the chloroplast. The catalysed reaction is chlorophyllide a + NADP(+) = protochlorophyllide a + NADPH + H(+). It functions in the pathway porphyrin-containing compound metabolism; chlorophyll biosynthesis. Functionally, phototransformation of protochlorophyllide (Pchlide) to chlorophyllide (Chlide). This chain is Protochlorophyllide reductase, chloroplastic (PORA), found in Cucumis sativus (Cucumber).